The chain runs to 340 residues: MGFIDEVKLCLKAGDGGDGCASFRREKFVEFGGPNGGNGGKGGNIVFISDANLNTLLHFRYRRHIKADSGKNGAGRDRSGTAGKDVILKVPVGAQIIDEESEEIIVDLDKPGMEFQVAQGGKGGLGNTNFKSSTNKAPRHFTYGQPGEEKHVLLKLKVLSDVGIIGMPNAGKSKFLTRCSNSDTKVGDYPFTTVRPHLGMVKVDDSEVVIADIPGIITDAHLGVGLGHKFLKHIERCQILLHLIDVTHDDVVLAYSCIHNELELYNSDLVEKEEIVVLNKCDLLREAEILEKKNHLANYLNKEVLCLSINGDLQPILRLLSEKLKKSNSKEIDVYDPFKA.

Residues 1–159 (MGFIDEVKLC…KHVLLKLKVL (159 aa)) enclose the Obg domain. Positions 160–329 (SDVGIIGMPN…LSEKLKKSNS (170 aa)) constitute an OBG-type G domain. Residues 166–173 (GMPNAGKS), 191–195 (FTTVR), 212–215 (DIPG), 279–282 (NKCD), and 310–312 (NGD) contribute to the GTP site. Mg(2+)-binding residues include S173 and T193.

Belongs to the TRAFAC class OBG-HflX-like GTPase superfamily. OBG GTPase family. In terms of assembly, monomer. Requires Mg(2+) as cofactor.

It is found in the cytoplasm. Its function is as follows. An essential GTPase which binds GTP, GDP and possibly (p)ppGpp with moderate affinity, with high nucleotide exchange rates and a fairly low GTP hydrolysis rate. Plays a role in control of the cell cycle, stress response, ribosome biogenesis and in those bacteria that undergo differentiation, in morphogenesis control. The chain is GTPase Obg from Wolbachia pipientis wMel.